The chain runs to 1002 residues: Carboxypeptidase Y (1002 aa).

The first 18 residues, 1 to 18 (MLMKQTFLYFLLTCVVSA), serve as a signal peptide directing secretion. The propeptide occupies 19-521 (QFNGYVPPEQ…AYLEMLKAEG (503 aa)). 3 disordered regions span residues 51 to 91 (QEES…TALE), 124 to 436 (DEDE…NMQS), and 527 to 546 (AFRD…ADSS). 2 stretches are compositionally biased toward basic and acidic residues: residues 63-81 (PERD…HEFN) and 127-143 (EHVR…EDAP). A compositionally biased stretch (basic residues) spans 144 to 170 (RRKHGKCKGKGKHHKGKHAKGKGKKSH). A compositionally biased stretch (basic and acidic residues) spans 171-205 (PKPEDDSVFFDDERPKHHEFDDEDREFPAHHEPGE). 15 repeat units span residues 225 to 237 (MHHE…PPPP), 238 to 250 (MHHE…PPPP), 251 to 263 (MHHE…PPPP), 264 to 276 (MHHE…PPPP), 277 to 289 (MHHE…PPPP), 290 to 302 (MHHE…PPPP), 303 to 315 (MHHE…PPPP), 316 to 328 (MHHE…PPPP), 329 to 341 (MHHE…PPPP), 361 to 369 (DKEHHKGPK), 370 to 378 (DKEHHKGPK), 379 to 387 (DKEHHKGPK), 388 to 396 (DKEHHKGPK), 397 to 405 (DKEHHKGPK), and 406 to 414 (DKEHHKGPK). Residues 225-341 (MHHEPGEHMP…EPGEHMPPPP (117 aa)) are 9 X 13 AA tandem repeats of M-H-H-E-P-G-E-H-M-P-P-P-P. A compositionally biased stretch (basic and acidic residues) spans 343–431 (KHHELEEHEG…PKEKHNERPE (89 aa)). The tract at residues 361 to 423 (DKEHHKGPKD…KDKEHHQGPK (63 aa)) is 7 X 9 AA tandem repeats of D-K-E-H-H-K-G-P-K. Residues 415-423 (DKEHHQGPK) form a 2-7; approximate repeat. Cystine bridges form between C627-C880, C776-C789, C799-C822, C806-C815, and C844-C851. N-linked (GlcNAc...) asparagine glycosylation occurs at N659. The active site involves S715. The active site involves D921. C924 is a substrate binding site. The active site involves H978. M979 provides a ligand contact to substrate.

Belongs to the peptidase S10 family. Heterodimer of two subunits of 32 kDa and 19 kDa derived from the precursor protein and linked by a disulfide bond.

Its subcellular location is the vacuole. It carries out the reaction Release of a C-terminal amino acid with broad specificity.. Functionally, involved in degradation of small peptides. Digests preferentially peptides containing an aliphatic or hydrophobic residue in P1' position, as well as methionine, leucine or phenylalanine in P1 position of ester substrate. In Schizosaccharomyces pombe (strain 972 / ATCC 24843) (Fission yeast), this protein is Carboxypeptidase Y (cpy1).